A 93-amino-acid polypeptide reads, in one-letter code: YcgL domain-containing protein KPN78578_22820 (93 aa).

One can recognise a YcgL domain in the interval 1–85 (MFCVIYRSTK…PSENLLKKHL (85 aa)).

This Klebsiella pneumoniae subsp. pneumoniae (strain ATCC 700721 / MGH 78578) protein is YcgL domain-containing protein KPN78578_22820.